A 274-amino-acid polypeptide reads, in one-letter code: 4-hydroxy-3-methylbut-2-enyl diphosphate reductase (274 aa).

[4Fe-4S] cluster is bound at residue cysteine 12. Residues histidine 36 and histidine 70 each contribute to the (2E)-4-hydroxy-3-methylbut-2-enyl diphosphate site. Residues histidine 36 and histidine 70 each coordinate dimethylallyl diphosphate. Positions 36 and 70 each coordinate isopentenyl diphosphate. Cysteine 92 provides a ligand contact to [4Fe-4S] cluster. Histidine 120 contacts (2E)-4-hydroxy-3-methylbut-2-enyl diphosphate. Histidine 120 contacts dimethylallyl diphosphate. Histidine 120 is a binding site for isopentenyl diphosphate. The active-site Proton donor is glutamate 122. Threonine 158 lines the (2E)-4-hydroxy-3-methylbut-2-enyl diphosphate pocket. Cysteine 186 is a binding site for [4Fe-4S] cluster. Residues serine 214, serine 215, asparagine 216, and serine 258 each coordinate (2E)-4-hydroxy-3-methylbut-2-enyl diphosphate. 4 residues coordinate dimethylallyl diphosphate: serine 214, serine 215, asparagine 216, and serine 258. Residues serine 214, serine 215, asparagine 216, and serine 258 each coordinate isopentenyl diphosphate.

This sequence belongs to the IspH family. It depends on [4Fe-4S] cluster as a cofactor.

It carries out the reaction isopentenyl diphosphate + 2 oxidized [2Fe-2S]-[ferredoxin] + H2O = (2E)-4-hydroxy-3-methylbut-2-enyl diphosphate + 2 reduced [2Fe-2S]-[ferredoxin] + 2 H(+). The enzyme catalyses dimethylallyl diphosphate + 2 oxidized [2Fe-2S]-[ferredoxin] + H2O = (2E)-4-hydroxy-3-methylbut-2-enyl diphosphate + 2 reduced [2Fe-2S]-[ferredoxin] + 2 H(+). It functions in the pathway isoprenoid biosynthesis; dimethylallyl diphosphate biosynthesis; dimethylallyl diphosphate from (2E)-4-hydroxy-3-methylbutenyl diphosphate: step 1/1. Its pathway is isoprenoid biosynthesis; isopentenyl diphosphate biosynthesis via DXP pathway; isopentenyl diphosphate from 1-deoxy-D-xylulose 5-phosphate: step 6/6. Functionally, catalyzes the conversion of 1-hydroxy-2-methyl-2-(E)-butenyl 4-diphosphate (HMBPP) into a mixture of isopentenyl diphosphate (IPP) and dimethylallyl diphosphate (DMAPP). Acts in the terminal step of the DOXP/MEP pathway for isoprenoid precursor biosynthesis. This chain is 4-hydroxy-3-methylbut-2-enyl diphosphate reductase, found in Helicobacter pylori (strain P12).